Here is a 556-residue protein sequence, read N- to C-terminus: Arginine--tRNA ligase (556 aa).

The 'HIGH' region motif lies at 132–142; that stretch reads ANPTGDLHLGH.

It belongs to the class-I aminoacyl-tRNA synthetase family. As to quaternary structure, monomer.

The protein localises to the cytoplasm. It carries out the reaction tRNA(Arg) + L-arginine + ATP = L-arginyl-tRNA(Arg) + AMP + diphosphate. This is Arginine--tRNA ligase from Listeria monocytogenes serotype 4b (strain CLIP80459).